Here is a 610-residue protein sequence, read N- to C-terminus: Zinc metalloproteinase-disintegrin-like bothropasin (610 aa).

The N-terminal stretch at 1–20 (MIEVLLVTICLAAFPYQGSS) is a signal peptide. A propeptide spanning residues 21 to 191 (IILESGNVND…ASQLVVTAEQ (171 aa)) is cleaved from the precursor. Pyrrolidone carboxylic acid is present on Gln192. Positions 198-394 (RYVELFIVVD…ENPQCILNEP (197 aa)) constitute a Peptidase M12B domain. Ca(2+)-binding residues include Glu201 and Asp285. 3 disulfides stabilise this stretch: Cys309–Cys389, Cys349–Cys373, and Cys351–Cys356. A Zn(2+)-binding site is contributed by His334. Glu335 is a catalytic residue. 2 residues coordinate Zn(2+): His338 and His344. N-linked (GlcNAc...) asparagine glycosylation is present at Asn372. Cys389, Asn392, Val404, Asn407, Leu409, Glu411, Glu414, and Asp417 together coordinate Ca(2+). In terms of domain architecture, Disintegrin spans 402–488 (PPVCGNELLE…ECPADVFHKN (87 aa)). Cystine bridges form between Cys405-Cys424, Cys405-Cys434, Cys416-Cys429, Cys416-Cys434, Cys418-Cys424, Cys428-Cys451, Cys442-Cys448, Cys447-Cys473, Cys460-Cys480, Cys467-Cys492, Cys467-Cys499, Cys492-Cys504, Cys499-Cys504, Cys511-Cys526, Cys511-Cys561, Cys526-Cys572, Cys539-Cys549, Cys549-Cys556, Cys556-Cys598, Cys561-Cys572, Cys592-Cys603, and Cys598-Cys603. The D/ECD-tripeptide motif lies at 466 to 468 (ECD). Ca(2+) is bound by residues Asp468, Pro469, Glu471, Asp483, and Val484.

It belongs to the venom metalloproteinase (M12B) family. P-III subfamily. P-IIIb sub-subfamily. As to quaternary structure, monomer. Zn(2+) is required as a cofactor. Expressed by the venom gland.

It localises to the secreted. The enzyme catalyses Cleavage of 5-His-|-Leu-6, 10-His-|-Leu-11, 14-Ala-|-Leu-15, 16-Tyr-|-Leu-17 and 24-Phe-|-Phe-25 in insulin B chain.. With respect to regulation, inhibited by EDTA and EGTA. In terms of biological role, has caseinolytic activity. Causes hemorrhage on rabbit skin and causes myonecrosis in mouse tibialis anterior muscle. Its function is as follows. Inhibits platelet aggregation. The polypeptide is Zinc metalloproteinase-disintegrin-like bothropasin (Bothrops jararaca (Jararaca)).